A 522-amino-acid polypeptide reads, in one-letter code: Tetratricopeptide repeat and J domain-containing co-chaperone DNJ1 (522 aa).

The N-terminal stretch at 1 to 22 (MKGFLLVALPVLFLSLSTQVFG) is a signal peptide. 7 TPR repeats span residues 29–62 (AAQI…DPTG), 63–96 (YANY…NPGF), 97–130 (VQAH…KSDS), 142–175 (GEAA…GPNS), 210–243 (TYLP…DPDS), 256–289 (LEKD…LVRF), and 356–389 (VDSW…SGRS). Residues 410-471 (DYYKVLGVPR…ELRQRYDNGD (62 aa)) form the J domain. Residues 465–494 (QRYDNGDDPNDPTGGQQHNPFAHHGGGMPF) form a disordered region.

The protein localises to the endoplasmic reticulum lumen. Endoplasmic reticulum co-chaperone crucial for survival and virulence factor production at elevated temperatures representative of febrile patients during infection. Contributes to virulence in a mouse model of cryptococcosis. With chaperone CNE1, coordinately maintains ER homeostasis and contributes to maintenance of cell wall architecture. This is Tetratricopeptide repeat and J domain-containing co-chaperone DNJ1 from Cryptococcus neoformans var. grubii serotype A (strain H99 / ATCC 208821 / CBS 10515 / FGSC 9487) (Filobasidiella neoformans var. grubii).